Consider the following 87-residue polypeptide: Small ribosomal subunit protein bS20 (87 aa).

Positions 1 to 15 are enriched in basic residues; that stretch reads MANHKSAMKRIKQTA. The tract at residues 1–27 is disordered; sequence MANHKSAMKRIKQTAKRTERNKHERST. A compositionally biased stretch (basic and acidic residues) spans 16-27; sequence KRTERNKHERST.

It belongs to the bacterial ribosomal protein bS20 family.

In terms of biological role, binds directly to 16S ribosomal RNA. In Citrifermentans bemidjiense (strain ATCC BAA-1014 / DSM 16622 / JCM 12645 / Bem) (Geobacter bemidjiensis), this protein is Small ribosomal subunit protein bS20.